The primary structure comprises 109 residues: ATP-dependent Clp protease adapter protein ClpS (109 aa).

Residues M1–T25 form a disordered region.

Belongs to the ClpS family. In terms of assembly, binds to the N-terminal domain of the chaperone ClpA.

Involved in the modulation of the specificity of the ClpAP-mediated ATP-dependent protein degradation. This chain is ATP-dependent Clp protease adapter protein ClpS, found in Phenylobacterium zucineum (strain HLK1).